Here is a 296-residue protein sequence, read N- to C-terminus: CTD kinase subunit gamma (296 aa).

The interval 25 to 44 is disordered; that stretch reads RDSITSSSTTTPPSSQQKLN. Over residues 29 to 39 the composition is skewed to low complexity; it reads TSSSTTTPPSS. Phosphothreonine is present on T35.

The protein belongs to the CTK3 family. In terms of assembly, CTDK-I consists of three subunits, CTK1, CTK2 and CTK3 (also called alpha, beta and gamma). Interacts with CTK1. Heterodimerization with CTK2 is required to protect this subunit from degradation. In terms of processing, ubiquitinated. Ubiquitination leads to degradation by the 26S proteasome pathway.

The protein localises to the nucleus. It localises to the nucleolus. It is found in the cytoplasm. Functionally, gamma subunit of the CTDK-I complex, which hyperphosphorylates the C-terminal heptapeptide repeat domain (CTD) of the largest RNA polymerase II subunit. CTDK-I phosphorylates 'Ser-5' if the CTD substrate is not phosphorylated at 'Ser-5', but will phosphorylate 'Ser-2' of a CTD substrate if 'Ser-5' is already phosphorylated. CTDK-I is also more reactive toward substrates that are prephosphorylated at 'Ser-2' or 'Ser-5' compared with an unphosphorylated CTD substrate, therefore efficiently creating doubly phosphorylated CTD repeats. Involved in RNA polymerase I transcription and RNA polymerase II transcriptional elongation, and as part of the CTDK-I complex, pre-mRNA 3'-end processing and SET2 mediated H3K36 methylation. Together with CTK2, required for CTK1 CTD kinase activation. Required for DNA damage induced transcription. Involved in the adaptation to alternative carbon sources, including galactose, glycerol and ethanol, but not raffinose. Required for the integrity of the rDNA locus. The chain is CTD kinase subunit gamma (CTK3) from Saccharomyces cerevisiae (strain ATCC 204508 / S288c) (Baker's yeast).